The primary structure comprises 764 residues: G-type lectin S-receptor-like serine/threonine-protein kinase SD3-1 (764 aa).

The N-terminal stretch at 1 to 24 is a signal peptide; sequence MKMLRALLLCLSLVFFLAFQIVVS. Bulb-type lectin domains follow at residues 25–151 and 154–279; these read EIQL…QSFG and TDTL…WKPV. The Extracellular segment spans residues 25–442; that stretch reads EIQLGSKLVV…TKSHSICIPC (418 aa). N-linked (GlcNAc...) asparagine glycans are attached at residues N92, N198, and N248. The EGF-like; atypical domain occupies 283-320; sequence VENQCRVFATCGSQVCSFNSSGYTECNCPFNAFVSVSD. 5 cysteine pairs are disulfide-bonded: C287-C298, C293-C308, C332-C413, C365-C388, and C369-C375. N-linked (GlcNAc...) asparagine glycans are attached at residues N301 and N353. In terms of domain architecture, Apple spans 332–413; that stretch reads CKSGFNMVKF…LSSISYVKTC (82 aa). Residue N423 is glycosylated (N-linked (GlcNAc...) asparagine). Residues 443-463 form a helical membrane-spanning segment; sequence LVGATSTTLVLFLGFQLGIVV. The Cytoplasmic portion of the chain corresponds to 464-764; that stretch reads YIYRRKKKLA…SESSQSLYEP (301 aa). The Protein kinase domain maps to 466–764; sequence YRRKKKLAKK…SESSQSLYEP (299 aa). ATP is bound by residues 508–516 and K526; that span reads IGPQIFKGV. The tract at residues 586-603 is caM-binding; that stretch reads LRSKKLTWRIRTDTCLSV. Residues 738–764 form a disordered region; the sequence is DPPPPPFACARSSPTNSSESSQSLYEP. Residues 749–764 are compositionally biased toward low complexity; sequence SSPTNSSESSQSLYEP.

The protein resides in the cell membrane. It catalyses the reaction L-seryl-[protein] + ATP = O-phospho-L-seryl-[protein] + ADP + H(+). The catalysed reaction is L-threonyl-[protein] + ATP = O-phospho-L-threonyl-[protein] + ADP + H(+). In Arabidopsis thaliana (Mouse-ear cress), this protein is G-type lectin S-receptor-like serine/threonine-protein kinase SD3-1 (SD31).